The chain runs to 1055 residues: Focal adhesion kinase 1 (1055 aa).

The segment at 1–29 (MAAAYLDPNLNHTPSSSTKTHLGTGTERS) is disordered. Ala-2 bears the N-acetylalanine mark. The residue at position 5 (Tyr-5) is a Phosphotyrosine. Residues 10 to 27 (LNHTPSSSTKTHLGTGTE) show a composition bias toward polar residues. Thr-13 bears the Phosphothreonine mark. Phosphoserine is present on residues Ser-29 and Ser-54. Positions 35–355 (RVLKVFHYFE…GYCRLVNGAT (321 aa)) constitute an FERM domain. Residue Lys-152 forms a Glycyl lysine isopeptide (Lys-Gly) (interchain with G-Cter in SUMO) linkage. Residue Tyr-397 is modified to Phosphotyrosine; by autocatalysis. Phosphotyrosine is present on Tyr-407. A Protein kinase domain is found at 422–680 (IELGRCIGEG…ELKAQLSTIL (259 aa)). ATP is bound by residues 428–434 (IGEGQFG), Lys-454, and 500–502 (ELC). Asp-546 functions as the Proton acceptor in the catalytic mechanism. Residues Tyr-570 and Tyr-576 each carry the phosphotyrosine modification. Residue Tyr-577 is modified to Phosphotyrosine; by RET and SRC. Residue Ser-580 is modified to Phosphoserine. Positions 685–697 (VQQEERMRMESRR) are enriched in basic and acidic residues. 2 disordered regions span residues 685-734 (VQQE…PSPQ) and 837-923 (VRLS…LDRS). The segment at 707–1055 (GSDEAPPKPS…LKMLGQTRPH (349 aa)) is interaction with TGFB1I1. The residue at position 722 (Ser-722) is a Phosphoserine. At Ser-732 the chain carries Phosphoserine; by CDK5. Basic and acidic residues predominate over residues 837–849 (VRLSRGSIDREDG). A Phosphoserine modification is found at Ser-843. Tyr-861 is subject to Phosphotyrosine. A compositionally biased stretch (pro residues) spans 869–880 (PAAPPKKPPRPG). Polar residues predominate over residues 886–896 (SNLSSISSPAE). Ser-913 carries the phosphoserine modification. Residues 915-1055 (PPTANLDRSN…LKMLGQTRPH (141 aa)) are interaction with ARHGEF28. Thr-917 is modified (phosphothreonine). A Phosphotyrosine modification is found at Tyr-928.

Belongs to the protein kinase superfamily. Tyr protein kinase family. FAK subfamily. In terms of assembly, interacts with GIT1. Component of a complex that contains at least FER, CTTN and PTK2/FAK1. Interacts with BMX. Interacts with STEAP4. Interacts with ZFYVE21. Interacts with ESR1. Interacts with PIK3R1 or PIK3R2. Interacts with FGR, FLT4 and RET. Interacts with EPHA2 in resting cells; activation of EPHA2 recruits PTPN11, leading to dephosphorylation of PTK2/FAK1 and dissociation of the complex. Interacts with EPHA1 (kinase activity-dependent). Interacts with P53/TP53. Interacts (via first Pro-rich region) with CAS family members (via SH3 domain), including BCAR1, BCAR3, and CASS4. Interacts with NEDD9 (via SH3 domain). Interacts with TGFB1I1. Interacts with SRC, GRB2 and GRB7. Interacts with ARHGEF28. Interacts with SHB. Part of a complex composed of THSD1, PTK2/FAK1, TLN1 and VCL. Interacts with PXN and TLN1. Interacts with SORBS1. Interacts with STAT1. Interacts with WASL. Interacts with ARHGAP26 and SHC1. Interacts with RB1CC1; this inhibits PTK2/FAK1 activity and activation of downstream signaling pathways. Interacts with ARHGEF7. Interacts with MDM2. Interacts with PIAS1. Interacts with DCC. Interacts with LPXN (via LD motif 3). Interacts with MISP. Interacts with EMP2; regulates PTK2 activation and localization. Interacts with DSCAM. Interacts with AMBRA1. Interacts (when tyrosine-phosphorylated) with tensin TNS1; the interaction is increased by phosphorylation of TNS1. In terms of processing, phosphorylated on tyrosine residues upon activation, e.g. upon integrin signaling. Tyr-397 is the major autophosphorylation site, but other kinases can also phosphorylate this residue. Phosphorylation at Tyr-397 promotes interaction with SRC and SRC family members, leading to phosphorylation at Tyr-576, Tyr-577 and at additional tyrosine residues. FGR promotes phosphorylation at Tyr-397 and Tyr-576. FER promotes phosphorylation at Tyr-577, Tyr-861 and Tyr-928, even when cells are not adherent. Tyr-397, Tyr-576 and Ser-722 are phosphorylated only when cells are adherent. Phosphorylation at Tyr-397 is important for interaction with BMX, PIK3R1 and SHC1. Phosphorylation at Tyr-928 is important for interaction with GRB2. Dephosphorylated by PTPN11; PTPN11 is recruited to PTK2 via EPHA2 (tyrosine phosphorylated). Microtubule-induced dephosphorylation at Tyr-397 is crucial for the induction of focal adhesion disassembly; this dephosphorylation could be catalyzed by PTPN11 and regulated by ZFYVE21. Phosphorylation on tyrosine residues is enhanced by NTN1. Post-translationally, sumoylated; this enhances autophosphorylation.

It is found in the cell junction. The protein localises to the focal adhesion. The protein resides in the cell membrane. Its subcellular location is the cytoplasm. It localises to the perinuclear region. It is found in the cell cortex. The protein localises to the cytoskeleton. The protein resides in the microtubule organizing center. Its subcellular location is the centrosome. It localises to the nucleus. It is found in the cilium basal body. It carries out the reaction L-tyrosyl-[protein] + ATP = O-phospho-L-tyrosyl-[protein] + ADP + H(+). With respect to regulation, subject to autoinhibition, mediated by interactions between the FERM domain and the kinase domain. Activated by autophosphorylation at Tyr-397. This promotes interaction with SRC and phosphorylation at Tyr-576 and Tyr-577 in the kinase activation loop by SRC. Phosphorylation at Tyr-397, Tyr-576 and Tyr-577 is required for maximal kinase activity. In terms of biological role, non-receptor protein-tyrosine kinase that plays an essential role in regulating cell migration, adhesion, spreading, reorganization of the actin cytoskeleton, formation and disassembly of focal adhesions and cell protrusions, cell cycle progression, cell proliferation and apoptosis. Required for early embryonic development and placenta development. Required for embryonic angiogenesis, normal cardiomyocyte migration and proliferation, and normal heart development. Regulates axon growth and neuronal cell migration, axon branching and synapse formation; required for normal development of the nervous system. Plays a role in osteogenesis and differentiation of osteoblasts. Functions in integrin signal transduction, but also in signaling downstream of numerous growth factor receptors, G-protein coupled receptors (GPCR), EPHA2, netrin receptors and LDL receptors. Forms multisubunit signaling complexes with SRC and SRC family members upon activation; this leads to the phosphorylation of additional tyrosine residues, creating binding sites for scaffold proteins, effectors and substrates. Regulates numerous signaling pathways. Promotes activation of phosphatidylinositol 3-kinase and the AKT1 signaling cascade. Promotes activation of MAPK1/ERK2, MAPK3/ERK1 and the MAP kinase signaling cascade. Promotes localized and transient activation of guanine nucleotide exchange factors (GEFs) and GTPase-activating proteins (GAPs), and thereby modulates the activity of Rho family GTPases. Signaling via CAS family members mediates activation of RAC1. Phosphorylates NEDD9 following integrin stimulation. Recruits the ubiquitin ligase MDM2 to P53/TP53 in the nucleus, and thereby regulates P53/TP53 activity, P53/TP53 ubiquitination and proteasomal degradation. Phosphorylates SRC; this increases SRC kinase activity. Phosphorylates ACTN1, ARHGEF7, GRB7, RET and WASL. Promotes phosphorylation of PXN and STAT1; most likely PXN and STAT1 are phosphorylated by a SRC family kinase that is recruited to autophosphorylated PTK2/FAK1, rather than by PTK2/FAK1 itself. Promotes phosphorylation of BCAR1; GIT2 and SHC1; this requires both SRC and PTK2/FAK1. Promotes phosphorylation of BMX and PIK3R1. Its function is as follows. Does not contain a kinase domain and inhibits PTK2/FAK1 phosphorylation and signaling. Its enhanced expression can attenuate the nuclear accumulation of LPXN and limit its ability to enhance serum response factor (SRF)-dependent gene transcription. The polypeptide is Focal adhesion kinase 1 (Rattus norvegicus (Rat)).